Consider the following 201-residue polypeptide: MRPATPLICAFGDKHKHTYGVTPICRALAVHGVQIASRTYFADRAAAPSKRALWDTTITEILAGYYEPDAEGKRPPECLYGSLKMWAHLQRQGFRWPSATVKTIMRANGWRGVPLAAHITHHRTRPGRGPGPRPGGSAMAGFSNEPAGSGRLHLRADDVEFRLHRVRGRRLRRCDRGLGMLADQRRSVRRTRITPRPSRLT.

The interval 121 to 141 is disordered; it reads HHRTRPGRGPGPRPGGSAMAG.

This is an uncharacterized protein from Mycobacterium tuberculosis (strain ATCC 25618 / H37Rv).